We begin with the raw amino-acid sequence, 288 residues long: Pyruvate synthase subunit PorB (288 aa).

[4Fe-4S] cluster-binding residues include Cys-16, Cys-19, and Cys-44. Polar residues predominate over residues 137 to 148 (STPYGASTTTSP). The segment at 137 to 159 (STPYGASTTTSPHGKESFGEDRP) is disordered. Residues 149–159 (HGKESFGEDRP) are compositionally biased toward basic and acidic residues. [4Fe-4S] cluster is bound at residue Cys-208.

Heterotetramer of one alpha, one beta, one delta and one gamma chain. [4Fe-4S] cluster is required as a cofactor.

The catalysed reaction is 2 oxidized [2Fe-2S]-[ferredoxin] + pyruvate + CoA = 2 reduced [2Fe-2S]-[ferredoxin] + acetyl-CoA + CO2 + H(+). The chain is Pyruvate synthase subunit PorB (porB) from Methanothermobacter thermautotrophicus (strain ATCC 29096 / DSM 1053 / JCM 10044 / NBRC 100330 / Delta H) (Methanobacterium thermoautotrophicum).